The sequence spans 350 residues: MAYNFVRSYIDTFRERTAAISHTSTFRETGQITPEEFVLAGDFLVFKFPSWQWGDASSAGKRVPYLPEGKQYLMTRGVPCHRRLDDNFAGEAGQDETIVGDGFAGSEGADDDGWLRTGGMAASQEAKVRDVRTVDESGNLGAAEEEDEIPDMEDMDDDEEAIIRDPQGGSSSTAPLRTYTLYICYSAHYRTPRLYLSGYGATSVPLKPQEMMEDIVGDYKDKTVTIEDFPFFEHALKTASVHPCKHASVMKVLLDRADAALKLRLAKLKAGKDIGKLDTGMEGLVDDTRLLKLSEQAKGKEGDEAKDDWEVLSEGGDDEVAIRVDQYLVVFLKFMASVTPGIEHDFTMGV.

Positions asparagine 87–aspartate 165 are flexible region. The segment covering alanine 126–aspartate 135 has biased composition (basic and acidic residues). The segment at alanine 126–glutamate 153 is disordered. The span at alanine 143 to glutamate 153 shows a compositional bias: acidic residues. Cysteine 244 functions as the Glycyl thioester intermediate in the catalytic mechanism. A handle region region spans residues serine 248–glutamine 326.

This sequence belongs to the ATG3 family. As to quaternary structure, monomer. Interacts with ATG8 through an intermediate thioester bond through the C-terminal Gly of ATG8. Also interacts with the 40 amino acid C-terminal region of the E1-like ATG7 enzyme. Also interacts with the ATG12-ATG5 conjugate.

It localises to the cytoplasm. E2 conjugating enzyme required for the cytoplasm to vacuole transport (Cvt) and autophagy. Required for selective autophagic degradation of the nucleus (nucleophagy) as well as for mitophagy which contributes to regulate mitochondrial quantity and quality by eliminating the mitochondria to a basal level to fulfill cellular energy requirements and preventing excess ROS production. Responsible for the E2-like covalent binding of phosphatidylethanolamine to the C-terminal Gly of ATG8. The ATG12-ATG5 conjugate plays a role of an E3 and promotes the transfer of ATG8 from ATG3 to phosphatidylethanolamine (PE). This step is required for the membrane association of ATG8. The formation of the ATG8-phosphatidylethanolamine conjugate is essential for autophagy and for the cytoplasm to vacuole transport (Cvt). The ATG8-PE conjugate mediates tethering between adjacent membranes and stimulates membrane hemifusion, leading to expansion of the autophagosomal membrane during autophagy. This chain is Autophagy-related protein 3 (ATG3), found in Phaeosphaeria nodorum (strain SN15 / ATCC MYA-4574 / FGSC 10173) (Glume blotch fungus).